The primary structure comprises 324 residues: Beta-ketoacyl-[acyl-carrier-protein] synthase III (324 aa).

Catalysis depends on residues Cys-112 and His-251. Positions 252–256 are ACP-binding; that stretch reads QANLR. Asn-281 is an active-site residue.

This sequence belongs to the thiolase-like superfamily. FabH family. In terms of assembly, homodimer.

Its subcellular location is the cytoplasm. It carries out the reaction malonyl-[ACP] + acetyl-CoA + H(+) = 3-oxobutanoyl-[ACP] + CO2 + CoA. Its pathway is lipid metabolism; fatty acid biosynthesis. Its function is as follows. Catalyzes the condensation reaction of fatty acid synthesis by the addition to an acyl acceptor of two carbons from malonyl-ACP. Catalyzes the first condensation reaction which initiates fatty acid synthesis and may therefore play a role in governing the total rate of fatty acid production. Possesses both acetoacetyl-ACP synthase and acetyl transacylase activities. Its substrate specificity determines the biosynthesis of branched-chain and/or straight-chain of fatty acids. The protein is Beta-ketoacyl-[acyl-carrier-protein] synthase III of Clostridium perfringens (strain 13 / Type A).